The chain runs to 123 residues: MARLMGVDLPREKRMEIALTYIYGIGRTRSKEILEATGVSPDLRSKDLSDDDLTKLRDYIEASEFKVEGDLRREVQADIRRKIEIGCYQGLRHRRGLPVRGQRTKTNARTRKGPKKTVAGKKK.

The interval 96–123 (GLPVRGQRTKTNARTRKGPKKTVAGKKK) is disordered.

It belongs to the universal ribosomal protein uS13 family. As to quaternary structure, part of the 30S ribosomal subunit. Forms a loose heterodimer with protein S19. Forms two bridges to the 50S subunit in the 70S ribosome.

In terms of biological role, located at the top of the head of the 30S subunit, it contacts several helices of the 16S rRNA. In the 70S ribosome it contacts the 23S rRNA (bridge B1a) and protein L5 of the 50S subunit (bridge B1b), connecting the 2 subunits; these bridges are implicated in subunit movement. Contacts the tRNAs in the A and P-sites. In Nocardia farcinica (strain IFM 10152), this protein is Small ribosomal subunit protein uS13.